The sequence spans 102 residues: RNA-binding protein Hfq (102 aa).

Positions 9 to 68 constitute a Sm domain; it reads DPFLNALRRERVPVSIYLVNGIKLQGQIESFDQFVILLKNTVSQMVYKHAISTVVPSRPV. The segment at 63–102 is disordered; that stretch reads VPSRPVSHHSNNAGGGASNNYHHGSNVQGSTAQQDSEETE. Residues 70–88 are compositionally biased toward low complexity; that stretch reads HHSNNAGGGASNNYHHGSN.

It belongs to the Hfq family. In terms of assembly, homohexamer.

Functionally, RNA chaperone that binds small regulatory RNA (sRNAs) and mRNAs to facilitate mRNA translational regulation in response to envelope stress, environmental stress and changes in metabolite concentrations. Also binds with high specificity to tRNAs. The protein is RNA-binding protein Hfq of Salmonella choleraesuis (strain SC-B67).